Reading from the N-terminus, the 199-residue chain is Small ribosomal subunit protein eS1 (199 aa).

This sequence belongs to the eukaryotic ribosomal protein eS1 family.

The sequence is that of Small ribosomal subunit protein eS1 from Pyrococcus abyssi (strain GE5 / Orsay).